We begin with the raw amino-acid sequence, 130 residues long: Small ribosomal subunit protein uS9 (130 aa).

This sequence belongs to the universal ribosomal protein uS9 family.

This chain is Small ribosomal subunit protein uS9, found in Geotalea uraniireducens (strain Rf4) (Geobacter uraniireducens).